The following is a 70-amino-acid chain: Probable ferredoxin TA0517 (70 aa).

4Fe-4S ferredoxin-type domains lie at 8 to 36 (TEMD…WLDE) and 37 to 66 (TVIK…AEWF). [4Fe-4S] cluster contacts are provided by Cys17, Cys20, Cys23, Cys27, Cys46, Cys49, Cys52, and Cys56.

Requires [4Fe-4S] cluster as cofactor.

In terms of biological role, ferredoxins are iron-sulfur proteins that transfer electrons in a wide variety of metabolic reactions. The protein is Probable ferredoxin TA0517 of Thermoplasma acidophilum (strain ATCC 25905 / DSM 1728 / JCM 9062 / NBRC 15155 / AMRC-C165).